Here is a 295-residue protein sequence, read N- to C-terminus: GTP cyclohydrolase FolE2 (295 aa).

This sequence belongs to the GTP cyclohydrolase IV family.

It catalyses the reaction GTP + H2O = 7,8-dihydroneopterin 3'-triphosphate + formate + H(+). Its pathway is cofactor biosynthesis; 7,8-dihydroneopterin triphosphate biosynthesis; 7,8-dihydroneopterin triphosphate from GTP: step 1/1. Functionally, converts GTP to 7,8-dihydroneopterin triphosphate. This is GTP cyclohydrolase FolE2 from Pseudomonas putida (strain W619).